The primary structure comprises 193 residues: 3-isopropylmalate dehydratase small subunit (193 aa).

The protein belongs to the LeuD family. LeuD type 1 subfamily. As to quaternary structure, heterodimer of LeuC and LeuD.

The catalysed reaction is (2R,3S)-3-isopropylmalate = (2S)-2-isopropylmalate. Its pathway is amino-acid biosynthesis; L-leucine biosynthesis; L-leucine from 3-methyl-2-oxobutanoate: step 2/4. In terms of biological role, catalyzes the isomerization between 2-isopropylmalate and 3-isopropylmalate, via the formation of 2-isopropylmaleate. This chain is 3-isopropylmalate dehydratase small subunit, found in Listeria monocytogenes serovar 1/2a (strain ATCC BAA-679 / EGD-e).